Here is a 161-residue protein sequence, read N- to C-terminus: NADH:FMN oxidoreductase (161 aa).

FMN contacts are provided by residues aspartate 30, 37-40, 54-61, alanine 88, arginine 94, and phenylalanine 151; these read AAST and CVQNSSTT.

This sequence belongs to the non-flavoprotein flavin reductase family.

The protein localises to the cytoplasm. It catalyses the reaction FMNH2 + NAD(+) = FMN + NADH + 2 H(+). The enzyme catalyses FADH2 + NAD(+) = FAD + NADH + 2 H(+). It functions in the pathway sulfur metabolism; dibenzothiophene degradation. In terms of biological role, an NADH:FMN oxidoreductase which supplies reduced FMN for the '4S' desulfurization pathway that removes covalently bound sulfur from dibenzothiophene (DBT) without breaking carbon-carbon bonds. Can also use FAD. Provides DszC and probably also DszA (DBT-monooxygenase and DBTO2-monooxygenase respectively) with reduced flavin (FMN and/or FAD). This is NADH:FMN oxidoreductase from Mycolicibacterium goodii (Mycobacterium goodii).